Consider the following 282-residue polypeptide: Heat stress transcription factor A-6a (282 aa).

A DNA-binding region spans residues 17–111; sequence PTAFLTKTYN…LLKNIKRRKT (95 aa). The tract at residues 111–177 is hydrophobic repeat HR-A/B; that stretch reads TSSQTQTQSL…MMMNFLLKKI (67 aa). Residues 175 to 190 carry the Bipartite nuclear localization signal motif; it reads KKIKKPSFLQSLRKRN. Residues 261 to 270 carry the AHA motif; sequence EGIWKGFVLS.

This sequence belongs to the HSF family. Class A subfamily. As to quaternary structure, homotrimer. In terms of processing, exhibits temperature-dependent phosphorylation.

The protein resides in the nucleus. Its function is as follows. Transcriptional activator that specifically binds DNA sequence 5'-AGAAnnTTCT-3' known as heat shock promoter elements (HSE). This Arabidopsis thaliana (Mouse-ear cress) protein is Heat stress transcription factor A-6a (HSFA6A).